Reading from the N-terminus, the 131-residue chain is Large-conductance mechanosensitive channel (131 aa).

Transmembrane regions (helical) follow at residues 8–28 (FAIRGNVIDLAVGVIIGGAFG), 30–50 (IVSSLVNDIIMPLVGLLLGGI), and 67–87 (GAFIQTVVDFLIIAFSIFLFV).

It belongs to the MscL family. In terms of assembly, homopentamer.

It is found in the cell membrane. Functionally, channel that opens in response to stretch forces in the membrane lipid bilayer. May participate in the regulation of osmotic pressure changes within the cell. In Geobacillus thermodenitrificans (strain NG80-2), this protein is Large-conductance mechanosensitive channel.